The primary structure comprises 470 residues: MTAPVQVPQSLLLLLMLLLTLPATGSDPVLCFSQYEDSSSKCKDLLGKDVSLEDCCLNAAYAFKERDNGHCQACRSPRWSPWSSWAPCSVSCSEGSQLRHRRCIGWGGQCSENKAPGTLEWQLQACEEQQCCPEMGGWSNWEPWGPCTVTCSKGTRIRRRVCNNPAPKCGGHCPGVAQESEACDTQQVCPTHGAWGPWGPWSSCLSSCHGGPHKPVETRSRTCSAPEPSKNPPGNPCPGTAYEQQSCAGLPPCPVAGGWGPWGSVSPCSVTCGLGQILEQRKCDNPVPQHGGSFCTGDDTRAHICNTAVPCPVDGEWEPWGDWSTCTRPHLSAIRCKEIVGQQTRVRICKGRKFNGQRCPGKHQEIRHCYNIQNCIFGEKGSWSQWTPWGLCTPPCGANPTRVRQRRCMASLPKFSPTVSVVEGQGEKNVTFWGKPLAQCEELQGQKVLLEEKRPCLHVPACKDPEEEEP.

The first 26 residues, 1–26 (MTAPVQVPQSLLLLLMLLLTLPATGS), serve as a signal peptide directing secretion. 7 TSP type-1 domains span residues 27-75 (DPVL…QACR), 76-133 (SPRW…QCCP), 135-190 (MGGW…QVCP), 192-254 (HGAW…PPCP), 256-312 (AGGW…VPCP), 314-376 (DGEW…QNCI), and 380-463 (KGSW…PACK). Intrachain disulfides connect Cys-31–Cys-55, Cys-42–Cys-71, and Cys-56–Cys-74. C-linked (Man) tryptophan glycans are attached at residues Trp-82 and Trp-85. 7 disulfide bridges follow: Cys-88–Cys-126, Cys-92–Cys-132, Cys-103–Cys-110, Cys-131–Cys-169, Cys-147–Cys-183, Cys-151–Cys-189, and Cys-162–Cys-173. Trp-138, Trp-141, and Trp-144 each carry a C-linked (Man) tryptophan glycan. The O-linked (Fuc...) threonine glycan is linked to Thr-150. 3 C-linked (Man) tryptophan glycosylation sites follow: Trp-195, Trp-198, and Trp-201. 3 cysteine pairs are disulfide-bonded: Cys-204–Cys-247, Cys-208–Cys-253, and Cys-223–Cys-237. O-linked (Fuc...) serine glycosylation is present at Ser-207. C-linked (Man) tryptophan glycosylation is found at Trp-259 and Trp-262. 3 disulfides stabilise this stretch: Cys-268-Cys-305, Cys-272-Cys-311, and Cys-283-Cys-295. A glycan (O-linked (Fuc...) threonine) is linked at Thr-271. Residues Trp-320 and Trp-323 are each glycosylated (C-linked (Man) tryptophan). 3 cysteine pairs are disulfide-bonded: Cys-326/Cys-369, Cys-336/Cys-375, and Cys-349/Cys-359. Positions 350-358 (KGRKFNGQR) are interaction with Complement C3 beta chain. Trp-383, Trp-386, and Trp-389 each carry a C-linked (Man) tryptophan glycan. 3 cysteine pairs are disulfide-bonded: Cys-392-Cys-456, Cys-396-Cys-462, and Cys-408-Cys-440. N-linked (GlcNAc...) asparagine glycosylation occurs at Asn-429.

In plasma, properdin exists as dimers, trimers or tetramers in the relative proportions of 26:54:20. Interacts with the pro-C3-convertase enzyme complex (C3b-Bb) comprised of Complement C3 beta chain (C3b) and the Complement factor B Bb fragment (Bb), where it binds (via its TSP type-1 5 domain) with C3b and Bb. This interaction stabilizes the complex and allows it to become the active C3-convertase enzyme complex (C3b-Bb-FP). Interacts with C3b. Interacts with CFB.

The protein resides in the secreted. Functionally, a positive regulator of the alternate pathway of complement. It binds to and stabilizes the C3- and C5-convertase enzyme complexes. Inhibits CFI-CFH mediated degradation of Inhibits CFI-CFH mediated degradation of Complement C3 beta chain (C3b). The protein is Properdin (CFP) of Cavia porcellus (Guinea pig).